The following is a 139-amino-acid chain: Lysozyme (139 aa).

The signal sequence occupies residues 1–19; that stretch reads MTKYVILLAVLAFALHCDA. Positions 20–139 constitute a C-type lysozyme domain; sequence KRFTRCGLVQ…QHGLPDISDC (120 aa). Disulfide bonds link cysteine 25–cysteine 139, cysteine 46–cysteine 129, cysteine 81–cysteine 95, and cysteine 91–cysteine 109. Catalysis depends on residues glutamate 51 and aspartate 69.

The protein belongs to the glycosyl hydrolase 22 family.

The catalysed reaction is Hydrolysis of (1-&gt;4)-beta-linkages between N-acetylmuramic acid and N-acetyl-D-glucosamine residues in a peptidoglycan and between N-acetyl-D-glucosamine residues in chitodextrins.. In terms of biological role, lysozymes have primarily a bacteriolytic function; those in tissues and body fluids are associated with the monocyte-macrophage system and enhance the activity of immunoagents. In Hyalophora cecropia (Cecropia moth), this protein is Lysozyme.